We begin with the raw amino-acid sequence, 320 residues long: Geranylgeranyl pyrophosphate synthase (320 aa).

Lys-35, Arg-38, and His-67 together coordinate isopentenyl diphosphate. The Mg(2+) site is built by Asp-74 and Asp-78. Arg-83 is a dimethylallyl diphosphate binding site. Arg-84 is a binding site for isopentenyl diphosphate. Dimethylallyl diphosphate-binding residues include Lys-168, Thr-169, Gln-206, Lys-223, and Lys-233.

This sequence belongs to the FPP/GGPP synthase family. Mg(2+) is required as a cofactor.

The protein resides in the cytoplasm. The enzyme catalyses isopentenyl diphosphate + dimethylallyl diphosphate = (2E)-geranyl diphosphate + diphosphate. It carries out the reaction isopentenyl diphosphate + (2E)-geranyl diphosphate = (2E,6E)-farnesyl diphosphate + diphosphate. It catalyses the reaction isopentenyl diphosphate + (2E,6E)-farnesyl diphosphate = (2E,6E,10E)-geranylgeranyl diphosphate + diphosphate. It participates in isoprenoid biosynthesis; farnesyl diphosphate biosynthesis; farnesyl diphosphate from geranyl diphosphate and isopentenyl diphosphate: step 1/1. It functions in the pathway isoprenoid biosynthesis; geranyl diphosphate biosynthesis; geranyl diphosphate from dimethylallyl diphosphate and isopentenyl diphosphate: step 1/1. Its pathway is isoprenoid biosynthesis; geranylgeranyl diphosphate biosynthesis; geranylgeranyl diphosphate from farnesyl diphosphate and isopentenyl diphosphate: step 1/1. Functionally, catalyzes the trans-addition of the 3 molecules of IPP onto DMAPP to form geranylgeranyl pyrophosphate. May be involved in vesicle trafficking and protein sorting. This Eremothecium gossypii (strain ATCC 10895 / CBS 109.51 / FGSC 9923 / NRRL Y-1056) (Yeast) protein is Geranylgeranyl pyrophosphate synthase (BTS1).